A 164-amino-acid polypeptide reads, in one-letter code: Ribosome maturation factor RimM (164 aa).

The PRC barrel domain occupies 90–161 (EGRYYVADII…EIIIKPVKTW (72 aa)).

This sequence belongs to the RimM family. Binds ribosomal protein uS19.

Its subcellular location is the cytoplasm. In terms of biological role, an accessory protein needed during the final step in the assembly of 30S ribosomal subunit, possibly for assembly of the head region. Essential for efficient processing of 16S rRNA. May be needed both before and after RbfA during the maturation of 16S rRNA. It has affinity for free ribosomal 30S subunits but not for 70S ribosomes. In Clostridium tetani (strain Massachusetts / E88), this protein is Ribosome maturation factor RimM.